Consider the following 346-residue polypeptide: Structure-specific endonuclease subunit SLX1 (346 aa).

Residues 22-105 (DFYGVYLLRS…QHPYQTRHIK (84 aa)) form the GIY-YIG domain. The SLX1-type zinc finger occupies 216 to 306 (CFICNETIDY…TPLQGKCLSC (91 aa)).

Belongs to the SLX1 family. As to quaternary structure, forms a heterodimer with SLX4. A divalent metal cation is required as a cofactor.

Its subcellular location is the nucleus. Functionally, catalytic subunit of the SLX1-SLX4 structure-specific endonuclease that resolves DNA secondary structures generated during DNA repair and recombination. Has endonuclease activity towards branched DNA substrates, introducing single-strand cuts in duplex DNA close to junctions with ss-DNA. The polypeptide is Structure-specific endonuclease subunit SLX1 (Debaryomyces hansenii (strain ATCC 36239 / CBS 767 / BCRC 21394 / JCM 1990 / NBRC 0083 / IGC 2968) (Yeast)).